Consider the following 447-residue polypeptide: KICSTOR complex protein ITFG2 (447 aa).

One copy of the FG-GAP 1; atypical repeat lies at 19-48 (FPHAICLGDVDNDTLNELVVGDTSGKVSVY). The residue at position 104 (Ser-104) is a Phosphoserine. An FG-GAP 2; atypical repeat occupies 126–155 (NTKVMLISDIDGDGCRELVVGYTDRVVRAF). Ser-220 is modified (phosphoserine).

In terms of assembly, part of the KICSTOR complex composed of KPTN, ITFG2, KICS2 and SZT2. SZT2 probably serves as a link between the other three proteins in the KICSTOR complex and may mediate the direct interaction with the GATOR complex via GATOR1. The KICSTOR complex interacts directly with the GATOR1 complex and most probably indirectly with the GATOR2 complex in an amino acid-independent manner.

It localises to the lysosome membrane. In terms of biological role, as part of the KICSTOR complex functions in the amino acid-sensing branch of the TORC1 signaling pathway. Recruits, in an amino acid-independent manner, the GATOR1 complex to the lysosomal membranes and allows its interaction with GATOR2 and the RAG GTPases. Functions upstream of the RAG GTPases and is required to negatively regulate mTORC1 signaling in absence of amino acids. In absence of the KICSTOR complex mTORC1 is constitutively localized to the lysosome and activated. The KICSTOR complex is also probably involved in the regulation of mTORC1 by glucose. The sequence is that of KICSTOR complex protein ITFG2 from Homo sapiens (Human).